The following is a 313-amino-acid chain: 4-hydroxy-3-methylbut-2-enyl diphosphate reductase (313 aa).

A [4Fe-4S] cluster-binding site is contributed by Cys12. (2E)-4-hydroxy-3-methylbut-2-enyl diphosphate-binding residues include His41 and His74. Dimethylallyl diphosphate is bound by residues His41 and His74. His41 and His74 together coordinate isopentenyl diphosphate. Residue Cys96 coordinates [4Fe-4S] cluster. His124 is a binding site for (2E)-4-hydroxy-3-methylbut-2-enyl diphosphate. His124 is a dimethylallyl diphosphate binding site. His124 lines the isopentenyl diphosphate pocket. Glu126 (proton donor) is an active-site residue. Residue Thr164 participates in (2E)-4-hydroxy-3-methylbut-2-enyl diphosphate binding. Cys194 is a binding site for [4Fe-4S] cluster. Residues Ser222, Ser223, Asn224, and Ser266 each coordinate (2E)-4-hydroxy-3-methylbut-2-enyl diphosphate. The dimethylallyl diphosphate site is built by Ser222, Ser223, Asn224, and Ser266. 4 residues coordinate isopentenyl diphosphate: Ser222, Ser223, Asn224, and Ser266.

Belongs to the IspH family. The cofactor is [4Fe-4S] cluster.

The enzyme catalyses isopentenyl diphosphate + 2 oxidized [2Fe-2S]-[ferredoxin] + H2O = (2E)-4-hydroxy-3-methylbut-2-enyl diphosphate + 2 reduced [2Fe-2S]-[ferredoxin] + 2 H(+). The catalysed reaction is dimethylallyl diphosphate + 2 oxidized [2Fe-2S]-[ferredoxin] + H2O = (2E)-4-hydroxy-3-methylbut-2-enyl diphosphate + 2 reduced [2Fe-2S]-[ferredoxin] + 2 H(+). It participates in isoprenoid biosynthesis; dimethylallyl diphosphate biosynthesis; dimethylallyl diphosphate from (2E)-4-hydroxy-3-methylbutenyl diphosphate: step 1/1. It functions in the pathway isoprenoid biosynthesis; isopentenyl diphosphate biosynthesis via DXP pathway; isopentenyl diphosphate from 1-deoxy-D-xylulose 5-phosphate: step 6/6. Catalyzes the conversion of 1-hydroxy-2-methyl-2-(E)-butenyl 4-diphosphate (HMBPP) into a mixture of isopentenyl diphosphate (IPP) and dimethylallyl diphosphate (DMAPP). Acts in the terminal step of the DOXP/MEP pathway for isoprenoid precursor biosynthesis. The polypeptide is 4-hydroxy-3-methylbut-2-enyl diphosphate reductase (Protochlamydia amoebophila (strain UWE25)).